The sequence spans 293 residues: DegV domain-containing protein MG326 homolog (293 aa).

Residues Thr3–Leu289 enclose the DegV domain. Hexadecanoate contacts are provided by Thr62 and Ser94.

Functionally, may bind long-chain fatty acids, such as palmitate, and may play a role in lipid transport or fatty acid metabolism. In Mycoplasma pneumoniae (strain ATCC 29342 / M129 / Subtype 1) (Mycoplasmoides pneumoniae), this protein is DegV domain-containing protein MG326 homolog.